A 384-amino-acid polypeptide reads, in one-letter code: Putative odorant receptor 98b (384 aa).

The Cytoplasmic segment spans residues 1-34; it reads MLTDKFLRLQSALFRLLGLELLHEQDVGHRYPWR. The chain crosses the membrane as a helical span at residues 35–55; that stretch reads SICCILSVASFMPLTIAFGLQ. Residues 56-66 lie on the Extracellular side of the membrane; the sequence is NVQNVEQLTDS. The chain crosses the membrane as a helical span at residues 67–87; sequence LCSVLVDLLALCKIGLFLWLY. Topologically, residues 88 to 128 are cytoplasmic; sequence KDFKFLIGQFYCVLQTETHTAVAEMIVTRESRRDQFISAMY. Residues 129–149 traverse the membrane as a helical segment; the sequence is AYCFITAGLSACLMSPLSMLI. The Extracellular portion of the chain corresponds to 150–177; it reads SYQRTGELQPKFPFPSVYPWDNMKLSNY. The chain crosses the membrane as a helical span at residues 178 to 198; the sequence is IISYFWNVCAALGVALPTVCV. The Cytoplasmic segment spans residues 199-258; it reads DTLFCSLSHNLCALFQIARHKMMHFEGRNTKETHENLKHVFQLYALCLNLGHFLNEYFRP. Residues 259-279 traverse the membrane as a helical segment; the sequence is LICQFVAASLHLCVLCYQLSA. The Extracellular segment spans residues 280–284; the sequence is NILQP. A helical transmembrane segment spans residues 285–305; the sequence is ALLFYAAFTAAVVGQVSIYCF. The Cytoplasmic portion of the chain corresponds to 306-329; that stretch reads CGSSIHSECQLFGQAIYESSWPHL. The chain crosses the membrane as a helical span at residues 330–350; that stretch reads LQENLQLVSSLKIAMMRSSLG. Over 351–384 the chain is Extracellular; it reads CPIDGYFFEANRETLITVSKAFIKVSKKTPQVND.

This sequence belongs to the insect chemoreceptor superfamily. Heteromeric odorant receptor channel (TC 1.A.69) family. Or1a subfamily. As to quaternary structure, interacts with Orco. Complexes exist early in the endomembrane system in olfactory sensory neurons (OSNs), coupling these complexes to the conserved ciliary trafficking pathway.

The protein localises to the cell membrane. In terms of biological role, odorant receptor which mediates acceptance or avoidance behavior, depending on its substrates. The odorant receptor repertoire encodes a large collection of odor stimuli that vary widely in identity, intensity, and duration. May form a complex with Orco to form odorant-sensing units, providing sensitive and prolonged odorant signaling and calcium permeability. The chain is Putative odorant receptor 98b (Or98b) from Drosophila melanogaster (Fruit fly).